The chain runs to 177 residues: ATP-dependent protease subunit HslV (177 aa).

Threonine 6 is a catalytic residue. Na(+)-binding residues include serine 162, cysteine 165, and threonine 168.

This sequence belongs to the peptidase T1B family. HslV subfamily. In terms of assembly, a double ring-shaped homohexamer of HslV is capped on each side by a ring-shaped HslU homohexamer. The assembly of the HslU/HslV complex is dependent on binding of ATP.

It localises to the cytoplasm. The enzyme catalyses ATP-dependent cleavage of peptide bonds with broad specificity.. With respect to regulation, allosterically activated by HslU binding. Its function is as follows. Protease subunit of a proteasome-like degradation complex believed to be a general protein degrading machinery. The chain is ATP-dependent protease subunit HslV from Desulforudis audaxviator (strain MP104C).